We begin with the raw amino-acid sequence, 428 residues long: MSAFIVLGAQWGDEGKGKMTDYLAENADVVVRFQGGNNAGHTVVVGEKEYKLHLIPSGILYNDKLNVIGNGVVLDPKALFEEINYLESLGVEITPDRLIISDRAHVIMPYHRVLDGIKERARGNKDIGTTGKGIGPSYTDKMERSGIRVCDLIHKEVFEENLKETLEVKNKIITEVFGGEALDYNEIYNEYLGYAEKLRPFVKDISVIVNKKIKDGKEVLFEGAQGTLLDIDYGTYPYVTSSSTIAGGVCIGAGVGPTAITNAVGIAKAYTTRVGKGPFPTELLDSTGDWVREKGHEFGVTTGRARRCGWLDLVILKTSARISGLTSFAVTKIDTLAGLDTLKVCTGYRLNGEIIDYVPASLEDLAKCEPIYEEFEGWDDSIANARCYEDLPENAIKYLKKIEDFTETKVSIVSVGPKRDQTMMISEI.

GTP contacts are provided by residues 12-18 (GDEGKGK) and 40-42 (GHT). Aspartate 13 functions as the Proton acceptor in the catalytic mechanism. Mg(2+) is bound by residues aspartate 13 and glycine 40. Residues 13-16 (DEGK), 38-41 (NAGH), threonine 130, arginine 144, glutamine 225, threonine 240, and arginine 304 contribute to the IMP site. Residue histidine 41 is the Proton donor of the active site. Position 300–306 (300–306 (VTTGRAR)) interacts with substrate. Residues arginine 306, 332–334 (KID), and 414–416 (SVG) each bind GTP.

This sequence belongs to the adenylosuccinate synthetase family. In terms of assembly, homodimer. Mg(2+) is required as a cofactor.

The protein localises to the cytoplasm. It carries out the reaction IMP + L-aspartate + GTP = N(6)-(1,2-dicarboxyethyl)-AMP + GDP + phosphate + 2 H(+). It functions in the pathway purine metabolism; AMP biosynthesis via de novo pathway; AMP from IMP: step 1/2. Functionally, plays an important role in the de novo pathway of purine nucleotide biosynthesis. Catalyzes the first committed step in the biosynthesis of AMP from IMP. The sequence is that of Adenylosuccinate synthetase from Clostridium botulinum (strain Okra / Type B1).